The chain runs to 325 residues: Beta-lactamase 1 (325 aa).

An N-terminal signal peptide occupies residues 1-26 (MRIRPTRRLLLGAVAPLALVPLVACG). Positions 30 to 50 (GSESGQQPGLGGCGTSAHGSA) are disordered. The active-site Acyl-ester intermediate is Ser-93. Substrate is bound at residue 270–272 (KSG).

It belongs to the class-A beta-lactamase family.

The enzyme catalyses a beta-lactam + H2O = a substituted beta-amino acid. The chain is Beta-lactamase 1 (blaL) from Streptomyces cacaoi.